We begin with the raw amino-acid sequence, 324 residues long: Polycomb complex protein BMI-1 (324 aa).

Residues 18 to 57 (CVLCGGYFIDATTIIECLHSFCKTCIVRYLETSKYCPICD) form an RING-type zinc finger. Positions 81–95 (KLVPGLFKNEMKRRR) match the Nuclear localization signal motif. Residues 160–180 (RYLRCPAAMTVMHLRKFLRSK) are interaction with PHC2. Residues 162–226 (LRCPAAMTVM…GPLPLKYRVR (65 aa)) form an interaction with E4F1 region. A disordered region spans residues 232–324 (MKMSHQRDGL…LNGSSATSSG (93 aa)). A compositionally biased stretch (low complexity) spans 264 to 276 (PSTSSCLPSPSTP). The segment covering 277 to 307 (VQSPHPQFPHISSTMNGTSNSPSANHQSSFA) has biased composition (polar residues). Residues 313-324 (SSLNGSSATSSG) show a composition bias toward low complexity.

In terms of assembly, component of a PRC1-like complex. Identified in a PRC1-like HPRC-H complex with CBX2, CBX4, CBX8, PHC1, PHC2, PHC3, RING1 and RNF2. Interacts with RNF2/RING2. Interacts with RING1. Part of a complex that contains RNF2, UB2D3 and BMI1, where RNF2 and BMI1 form a tight heterodimer, and UB2D3 interacts only with RNF2. The complex composed of RNF2, UB2D3 and BMI1 binds nucleosomes, and has activity only with nucleosomal histone H2A. Interacts with CBX7 and CBX8. Interacts with SPOP. Part of a complex consisting of BMI1, CUL3 and SPOP. Interacts with E4F1. Interacts with PHC2. Interacts with zinc finger protein ZNF277. May be part of a complex including at least ZNF277, BMI1 and RNF2/RING2. May be polyubiquitinated; which does not lead to proteasomal degradation. Monoubiquitinated. As to expression, detected in most organs with high expression levels in thymus, heart, brain and testis.

The protein localises to the nucleus. The protein resides in the cytoplasm. In terms of biological role, component of a Polycomb group (PcG) multiprotein PRC1-like complex, a complex class required to maintain the transcriptionally repressive state of many genes, including Hox genes, throughout development. PcG PRC1 complex acts via chromatin remodeling and modification of histones; it mediates monoubiquitination of histone H2A 'Lys-119', rendering chromatin heritably changed in its expressibility. The complex composed of RNF2, UB2D3 and BMI1 binds nucleosomes, and has activity only with nucleosomal histone H2A. In the PRC1-like complex, regulates the E3 ubiquitin-protein ligase activity of RNF2/RING2. The protein is Polycomb complex protein BMI-1 (Bmi1) of Mus musculus (Mouse).